Here is a 27-residue protein sequence, read N- to C-terminus: ITFSKIYRSCKSDSDCGNQKCARGRCV.

This sequence belongs to the u18-CNTX family. In terms of tissue distribution, expressed by the venom gland.

It localises to the secreted. Functionally, not toxic to mice by intracerebroventricular injection. The chain is U18-ctenitoxin-Co1a from Ctenus ornatus (Brazilian spider).